We begin with the raw amino-acid sequence, 129 residues long: Glycine cleavage system H protein (129 aa).

The 83-residue stretch at 24 to 106 (TFTVGISEHA…YGDGWLFRIK (83 aa)) folds into the Lipoyl-binding domain. K65 is modified (N6-lipoyllysine).

The protein belongs to the GcvH family. As to quaternary structure, the glycine cleavage system is composed of four proteins: P, T, L and H. The cofactor is (R)-lipoate.

Functionally, the glycine cleavage system catalyzes the degradation of glycine. The H protein shuttles the methylamine group of glycine from the P protein to the T protein. The sequence is that of Glycine cleavage system H protein from Pseudoalteromonas atlantica (strain T6c / ATCC BAA-1087).